The following is a 232-amino-acid chain: Phosphatidylserine decarboxylase proenzyme (232 aa).

The active-site Schiff-base intermediate with substrate; via pyruvic acid is the S190. Residue S190 is modified to Pyruvic acid (Ser); by autocatalysis.

Belongs to the phosphatidylserine decarboxylase family. PSD-A subfamily. In terms of assembly, heterodimer of a large membrane-associated beta subunit and a small pyruvoyl-containing alpha subunit. The cofactor is pyruvate. In terms of processing, is synthesized initially as an inactive proenzyme. Formation of the active enzyme involves a self-maturation process in which the active site pyruvoyl group is generated from an internal serine residue via an autocatalytic post-translational modification. Two non-identical subunits are generated from the proenzyme in this reaction, and the pyruvate is formed at the N-terminus of the alpha chain, which is derived from the carboxyl end of the proenzyme. The post-translation cleavage follows an unusual pathway, termed non-hydrolytic serinolysis, in which the side chain hydroxyl group of the serine supplies its oxygen atom to form the C-terminus of the beta chain, while the remainder of the serine residue undergoes an oxidative deamination to produce ammonia and the pyruvoyl prosthetic group on the alpha chain.

It localises to the cell membrane. It catalyses the reaction a 1,2-diacyl-sn-glycero-3-phospho-L-serine + H(+) = a 1,2-diacyl-sn-glycero-3-phosphoethanolamine + CO2. Its pathway is phospholipid metabolism; phosphatidylethanolamine biosynthesis; phosphatidylethanolamine from CDP-diacylglycerol: step 2/2. Functionally, catalyzes the formation of phosphatidylethanolamine (PtdEtn) from phosphatidylserine (PtdSer). The sequence is that of Phosphatidylserine decarboxylase proenzyme from Methylocella silvestris (strain DSM 15510 / CIP 108128 / LMG 27833 / NCIMB 13906 / BL2).